The following is a 725-amino-acid chain: ATP-dependent DNA helicase II subunit 2 (725 aa).

In terms of domain architecture, Ku spans 232 to 478 (LTLGDPQKYP…QQAMSDYVDA (247 aa)).

This sequence belongs to the ku80 family. As to quaternary structure, heterodimer of mus-51/ku70 and mus-52/ku80.

The protein localises to the nucleus. It localises to the chromosome. Its subcellular location is the telomere. The enzyme catalyses ATP + H2O = ADP + phosphate + H(+). Functionally, single-stranded DNA-dependent ATP-dependent helicase. Involved in non-homologous end joining (NHEJ) DNA double strand break repair. DNA-binding is sequence-independent but has a high affinity to nicks in double-stranded DNA and to the ends of duplex DNA. Binds to naturally occurring chromosomal ends, and therefore provides chromosomal end protection. Required also for telomere recombination to repair telomeric ends in the absence of telomerase. ku70, of the ku70/ku80 heterodimer, binds to the stem loop of tlc1, the RNA component of telomerase. Involved in telomere maintenance. Interacts with telomeric repeats and subtelomeric sequences thereby controlling telomere length and protecting against subtelomeric rearrangement. Maintains telomeric chromatin, which is involved in silencing the expression of genes located at the telomere. Required for mating-type switching. The sequence is that of ATP-dependent DNA helicase II subunit 2 (mus-52) from Neurospora crassa (strain ATCC 24698 / 74-OR23-1A / CBS 708.71 / DSM 1257 / FGSC 987).